Reading from the N-terminus, the 110-residue chain is Small ribosomal subunit protein bS16 (110 aa).

The interval 87 to 110 (ARNNPEKAVPRKERKAAAEAAAKK) is disordered.

This sequence belongs to the bacterial ribosomal protein bS16 family.

The polypeptide is Small ribosomal subunit protein bS16 (Rhodopseudomonas palustris (strain HaA2)).